Reading from the N-terminus, the 245-residue chain is MTLTASSSSRAVTNSPVVVALDYHNRDAALAFVDKIDPRDCRLKVGKEMFTLFGPQFVRELQQRGFDIFLDLKFHDIPNTAAHAVAAAADLGVWMVNVHASGGARMMTAAREALVPFGKDAPLLIAVTVLTSMEASDLADLGVTLSPADYAERLAALTQKCGLDGVVCSAQEAVRFKQVFGQEFKLVTPGIRPQGSEAGDQRRIMTPEQALAAGVDYMVIGRPVTQSVDPAQTLKAINASLQRSA.

Residues D22, K44, 71–80, T131, R192, Q201, G221, and R222 contribute to the substrate site; that span reads DLKFHDIPNT. Catalysis depends on K73, which acts as the Proton donor.

This sequence belongs to the OMP decarboxylase family. Type 1 subfamily. As to quaternary structure, homodimer.

It carries out the reaction orotidine 5'-phosphate + H(+) = UMP + CO2. The protein operates within pyrimidine metabolism; UMP biosynthesis via de novo pathway; UMP from orotate: step 2/2. In terms of biological role, catalyzes the decarboxylation of orotidine 5'-monophosphate (OMP) to uridine 5'-monophosphate (UMP). This Escherichia coli O157:H7 protein is Orotidine 5'-phosphate decarboxylase.